A 451-amino-acid polypeptide reads, in one-letter code: MGKYFGTDGVRGEANVELTPELAFQLGRFGGYVLSQHETERPKVFVARDTRISGEMLESALIAGLLSVGIEVYKLGVLATPGVSYLVRTEKASAGVMISASHNPALDNGIKFFGNDGFKLADDQELEIEALLDAPEDTLPRPSAEGLGTLVDYPEGLRKYEKFLVTTGTDLSGMTVALDTANGAASVSARDVFLDLNAEIAVIGEKPNGLNINDGVGSTHPEQLQELVKETGADLGLAFDGDSDRLIAVDETGEIVDGDRIMFIIGKYLSEKGLLAHNTIVTTVMSNLGFHKALDKQGINKAITAVGDRYVVEEMRSSGYNLGGEQSGHVIIMDYNTTGDGQLTAIQLAKVMKETGKSLSELAAEVTIYPQKLVNIRVENSMKERAMEVPAIANIIAKMEDEMAGNGRILVRPSGTEPLLRVMAEAPTDAEVDYYVDTIADVVRTEIGCDN.

The Phosphoserine intermediate role is filled by Ser101. Mg(2+) contacts are provided by Ser101, Asp240, Asp242, and Asp244. Ser101 is modified (phosphoserine).

This sequence belongs to the phosphohexose mutase family. Requires Mg(2+) as cofactor. Post-translationally, activated by phosphorylation.

It carries out the reaction alpha-D-glucosamine 1-phosphate = D-glucosamine 6-phosphate. In terms of biological role, catalyzes the conversion of glucosamine-6-phosphate to glucosamine-1-phosphate. The protein is Phosphoglucosamine mutase of Streptococcus pyogenes serotype M3 (strain SSI-1).